A 235-amino-acid chain; its full sequence is Orotidine 5'-phosphate decarboxylase (235 aa).

Residues aspartate 17, lysine 39, 66–75, threonine 121, arginine 182, glutamine 191, glycine 211, and arginine 212 contribute to the substrate site; that span reads DLKLHDIGNT. The Proton donor role is filled by lysine 68.

This sequence belongs to the OMP decarboxylase family. Type 1 subfamily. In terms of assembly, homodimer.

The catalysed reaction is orotidine 5'-phosphate + H(+) = UMP + CO2. It participates in pyrimidine metabolism; UMP biosynthesis via de novo pathway; UMP from orotate: step 2/2. Its function is as follows. Catalyzes the decarboxylation of orotidine 5'-monophosphate (OMP) to uridine 5'-monophosphate (UMP). The protein is Orotidine 5'-phosphate decarboxylase of Afipia carboxidovorans (strain ATCC 49405 / DSM 1227 / KCTC 32145 / OM5) (Oligotropha carboxidovorans).